The primary structure comprises 120 residues: UPF0145 protein Mboo_1021 (120 aa).

This sequence belongs to the UPF0145 family.

The protein is UPF0145 protein Mboo_1021 of Methanoregula boonei (strain DSM 21154 / JCM 14090 / 6A8).